We begin with the raw amino-acid sequence, 498 residues long: ATP synthase subunit beta, chloroplastic (498 aa).

Threonine 6 carries the phosphothreonine modification. Serine 13 bears the Phosphoserine mark. 172–179 (GGAGVGKT) contacts ATP.

The protein belongs to the ATPase alpha/beta chains family. F-type ATPases have 2 components, CF(1) - the catalytic core - and CF(0) - the membrane proton channel. CF(1) has five subunits: alpha(3), beta(3), gamma(1), delta(1), epsilon(1). CF(0) has four main subunits: a(1), b(1), b'(1) and c(9-12).

It is found in the plastid. The protein localises to the chloroplast thylakoid membrane. The catalysed reaction is ATP + H2O + 4 H(+)(in) = ADP + phosphate + 5 H(+)(out). Its function is as follows. Produces ATP from ADP in the presence of a proton gradient across the membrane. The catalytic sites are hosted primarily by the beta subunits. This Nasturtium officinale (Watercress) protein is ATP synthase subunit beta, chloroplastic.